The primary structure comprises 362 residues: 3-dehydroquinate synthase (362 aa).

Residues 70 to 75, 104 to 108, 128 to 129, Lys-141, and Lys-150 contribute to the NAD(+) site; these read DGEKYK, GVIGD, and TT. Zn(2+) is bound by residues Glu-183, His-246, and His-263.

This sequence belongs to the sugar phosphate cyclases superfamily. Dehydroquinate synthase family. Co(2+) serves as cofactor. The cofactor is Zn(2+). NAD(+) is required as a cofactor.

It is found in the cytoplasm. The catalysed reaction is 7-phospho-2-dehydro-3-deoxy-D-arabino-heptonate = 3-dehydroquinate + phosphate. It participates in metabolic intermediate biosynthesis; chorismate biosynthesis; chorismate from D-erythrose 4-phosphate and phosphoenolpyruvate: step 2/7. In terms of biological role, catalyzes the conversion of 3-deoxy-D-arabino-heptulosonate 7-phosphate (DAHP) to dehydroquinate (DHQ). The chain is 3-dehydroquinate synthase from Acinetobacter baylyi (strain ATCC 33305 / BD413 / ADP1).